The following is a 976-amino-acid chain: Vacuolar membrane protease (976 aa).

The Cytoplasmic portion of the chain corresponds to 1-15 (MKLKSVFRSVLKYRK). A helical membrane pass occupies residues 16-36 (TNLSLLLLITYSIITLLYIFD). Topologically, residues 37–359 (HERYKLNLPK…KFFVISAKTL (323 aa)) are vacuolar. 2 N-linked (GlcNAc...) asparagine glycosylation sites follow: Asn-96 and Asn-121. 2 residues coordinate Zn(2+): His-156 and Asp-168. Asn-189 carries an N-linked (GlcNAc...) asparagine glycan. The Proton acceptor role is filled by Glu-200. Glu-201 lines the Zn(2+) pocket. N-linked (GlcNAc...) asparagine glycans are attached at residues Asn-212 and Asn-217. Glu-226 and His-300 together coordinate Zn(2+). A helical membrane pass occupies residues 360-380 (FYWNCIFLLVSPVVAIGLYLI). At 381–392 (SRDRMTWKSHSW) the chain is on the cytoplasmic side. The chain crosses the membrane as a helical span at residues 393-412 (LSWTRFPLSLAAGIIVQKLF). Residues 413-428 (SNDIIRSNPLTFSRNY) are Vacuolar-facing. The helical transmembrane segment at 429–449 (FWPISAFFTQVIFTSYVLINC) threads the bilayer. The Cytoplasmic portion of the chain corresponds to 450 to 461 (SNFFFPCADMKS). Residues 462–482 (LSIIELFIILWTILLFTSKLL) traverse the membrane as a helical segment. The Vacuolar portion of the chain corresponds to 483 to 496 (YSSDYRYTGLYPLS). The helical transmembrane segment at 497–517 (IFFLLSTIAAILRLLALALGM) threads the bilayer. Residues 518–627 (RTRKRLGREC…NSLKLEYTDY (110 aa)) lie on the Cytoplasmic side of the membrane. The segment at 528-610 (RDHHSNYSSH…PLLKGSNSME (83 aa)) is disordered. Residues 549 to 558 (NLEQPQDQFT) show a composition bias toward polar residues. Low complexity predominate over residues 559–570 (SSQDDQASIQDD). A compositionally biased stretch (basic and acidic residues) spans 582–601 (NVDEDHGMDSSSQQHDERVP). The helical transmembrane segment at 628–648 (AWIIQFLLIVPIPSFILFNSV) threads the bilayer. At 649–668 (DVIMDALNHTVQEGSKATFD) the chain is on the vacuolar side. A glycan (N-linked (GlcNAc...) asparagine) is linked at Asn-656. Residues 669–689 (VLRFGMVGSILIALPILPFFY) form a helical membrane-spanning segment. The Cytoplasmic segment spans residues 690–692 (KVN). Residues 693-713 (YITISLTALLFLISASKTLLV) form a helical membrane-spanning segment. The Vacuolar segment spans residues 714–976 (HPFTNSNPLK…LVIVKDAIIL (263 aa)). 5 N-linked (GlcNAc...) asparagine glycosylation sites follow: Asn-768, Asn-796, Asn-811, Asn-866, and Asn-937.

Belongs to the peptidase M28 family. Zn(2+) serves as cofactor.

It is found in the vacuole membrane. Its function is as follows. May be involved in vacuolar sorting and osmoregulation. The protein is Vacuolar membrane protease of Saccharomyces cerevisiae (strain JAY291) (Baker's yeast).